We begin with the raw amino-acid sequence, 137 residues long: ATP synthase epsilon chain (137 aa).

This sequence belongs to the ATPase epsilon chain family. In terms of assembly, F-type ATPases have 2 components, CF(1) - the catalytic core - and CF(0) - the membrane proton channel. CF(1) has five subunits: alpha(3), beta(3), gamma(1), delta(1), epsilon(1). CF(0) has three main subunits: a, b and c.

It is found in the cellular thylakoid membrane. Functionally, produces ATP from ADP in the presence of a proton gradient across the membrane. The chain is ATP synthase epsilon chain from Trichormus variabilis (strain ATCC 29413 / PCC 7937) (Anabaena variabilis).